Here is a 594-residue protein sequence, read N- to C-terminus: RING finger protein 207 (594 aa).

The segment at 25-64 (CPLCHAQYERPCLLDCFHDFCAGCLRGRTADGRVACPLCQ) adopts an RING-type zinc-finger fold. The B box-type; atypical zinc-finger motif lies at 93–145 (VEAVHCANCDLDCSKQDAETACFCNTCGQPLCARCRDETHRARMFARHDIVAL). Positions 98, 101, 127, and 132 each coordinate Zn(2+). Positions 369–400 (NTLAGGSGPKVLMGPSCPSPVRKVSRSPVQKP) are disordered. Positions 424-458 (CRHYEDSYRGLQAEVQNLKDQVQELHRDLTKHHSL) form a coiled coil. The disordered stretch occupies residues 552 to 594 (FQASADDESENPQTAYDASRNGETPASLLLPGSVASAEPPFVN). Residues 562-575 (NPQTAYDASRNGET) show a composition bias toward polar residues.

As to quaternary structure, interacts with the core-glycosylated, but not the fully glycosylated form of KCNH2/HERG. Interacts with DNAJA1 and HSPA8. Interacts (via the C-terminus) with HSPA1A; this interaction additively increases KCNH2 expression.

Its subcellular location is the cytoplasm. Plays a role in cardiac repolarization possibly by stabilizing membrane expression of the potassium channel KCNH2/HERG, or by assisting its synthesis, folding or export from the endoplasmic reticulum, in a heat shock protein-dependent manner. The protein is RING finger protein 207 (RNF207) of Oryctolagus cuniculus (Rabbit).